The sequence spans 180 residues: Dual-action ribosomal maturation protein DarP (180 aa).

It belongs to the DarP family.

The protein resides in the cytoplasm. In terms of biological role, member of a network of 50S ribosomal subunit biogenesis factors which assembles along the 30S-50S interface, preventing incorrect 23S rRNA structures from forming. Promotes peptidyl transferase center (PTC) maturation. The protein is Dual-action ribosomal maturation protein DarP of Pasteurella multocida (strain Pm70).